A 213-amino-acid polypeptide reads, in one-letter code: Large ribosomal subunit protein uL3 (213 aa).

The disordered stretch occupies residues 131–168 (GPMSHGSKNHRLPGSTGAGTTPGRVYPGKRMAGRSGND).

The protein belongs to the universal ribosomal protein uL3 family. In terms of assembly, part of the 50S ribosomal subunit. Forms a cluster with proteins L14 and L19.

Its function is as follows. One of the primary rRNA binding proteins, it binds directly near the 3'-end of the 23S rRNA, where it nucleates assembly of the 50S subunit. This Synechococcus elongatus (strain ATCC 33912 / PCC 7942 / FACHB-805) (Anacystis nidulans R2) protein is Large ribosomal subunit protein uL3.